We begin with the raw amino-acid sequence, 133 residues long: Carbohydrate-binding protein AWN (133 aa).

Residue Ala1 is modified to N-acetylalanine. Intrachain disulfides connect Cys9/Cys30 and Cys53/Cys74. In terms of domain architecture, CUB spans 9–110 (CGGVLRDPPG…SPFHIYYYAD (102 aa)). The tract at residues 73–110 (ICGGISLVFRSSSNIATIKYLRTSGQRASPFHIYYYAD) is heparin-binding.

The protein belongs to the spermadhesin family.

It is found in the secreted. In terms of biological role, mediates the binding of spermatozoa to component(s) of the egg's zona pellucida by a carbohydrate-binding mechanism. It is a secretory component of the male accessory glands being coated to the sperm surface at the time of ejaculation. This chain is Carbohydrate-binding protein AWN, found in Equus caballus (Horse).